The sequence spans 290 residues: Sodium/potassium-transporting ATPase subunit beta-2 (290 aa).

Residues 1 to 39 are Cytoplasmic-facing; it reads MVIQKEKKSCGQVVEEWKEFVWNPRTHQFMGRTGTSWAF. A helical; Signal-anchor for type II membrane protein membrane pass occupies residues 40–67; the sequence is ILLFYLVFYGFLTAMFTLTMWVMLQTVS. The Extracellular segment spans residues 68 to 290; it reads DHTPKYQDRL…VAFKLRINKT (223 aa). Asparagine 96 and asparagine 118 each carry an N-linked (GlcNAc...) asparagine glycan. Residues cysteine 129 and cysteine 150 are joined by a disulfide bond. Residues asparagine 153 and asparagine 159 are each glycosylated (N-linked (GlcNAc...) asparagine). A disulfide bridge links cysteine 160 with cysteine 177. Residues asparagine 193, asparagine 197, and asparagine 238 are each glycosylated (N-linked (GlcNAc...) asparagine). An immunoglobulin-like region spans residues 193-290; that stretch reads NQSMNVTCAG…VAFKLRINKT (98 aa). Cysteine 200 and cysteine 261 form a disulfide bridge.

This sequence belongs to the X(+)/potassium ATPases subunit beta family. The sodium/potassium-transporting ATPase is composed of a catalytic alpha subunit, an auxiliary non-catalytic beta subunit and an additional regulatory subunit. Interacts with BSG.

The protein localises to the cell membrane. Its function is as follows. This is the non-catalytic component of the active enzyme, which catalyzes the hydrolysis of ATP coupled with the exchange of Na(+) and K(+) ions across the plasma membrane. The exact function of the beta-2 subunit is not known. Functionally, mediates cell adhesion of neurons and astrocytes, and promotes neurite outgrowth. The chain is Sodium/potassium-transporting ATPase subunit beta-2 (ATP1B2) from Ochotona curzoniae (Black-lipped pika).